Consider the following 1029-residue polypeptide: MTLDYEIYKEGGILNNRYQKIEDISEGSYGYVSLAKDVREKRLVAVKYIFKLEDDGQYDGPQDDENDCDSSDCDDDEDTKVDTDRHENENGNASSNNGSSREKKHNLYKHKKSLISSKVKSRLSNNICLEAMYEVDIQTKIGRHQNIAALLDFFDSYIIMEYCSGGDLYEAIKADAVPKKTKSITHIITQIMDAIEYVHNKGIYHRDIKPENILISGIDWTIKLTDWGLATTDKTSMDRNVGSERYMSPELFDSNLDIKERKEPYDCAKVDLWAMGIVFLNIVFHKNPFSIANQSDKSFCYFAANREALFDVFSTMAYDFFQVLRYSLTIDPANRDLKMMRTELQNLSEYTLDDEYYNNLDEGYEETMIDGLPPQPVPPSSAPVSLPTPISSSNKQHMPEFKKDFNFNNVNERKRSDVSQNQNVASGFFKKPSTQQQKFFNQGYNTTLSTHERAKSAPKFKFKKRNKYGRTDNQFSKPVNIEDRKKSKILKKSRKPLGIPTPNTHMNNFFHDYKARDEFNTRDFFTPPSVQHRYMEGFSNNNNKQYRQNRNYNNNNNNSNNNHGSNYNNFNNGNSYIKGWNKNFNKYRRPSSSSYTGKSPLSRYNMSYNHNNNSSINGYARRGSTTTVQHSPGAYIPPNARNHHVSPTNQFLRVPQSTAPDISTVLGGKPSYQEHYTQDSMDSEGDHDSDDVLFTLEEGDHDFVNGMDNLSINDHLPHTTVGSHNEVFVHASTNHNNNGNNNHIDTNSTTNQYHRQYIPPPLTTSLHINNNNNESNELPDLLKSPASSEAHLNLSSGPIDPILTGNIGNRYSHSSDSKELEQERRLSMEQKFKNGVYVPPHHRKSFNLGTQVPPMNMKTSNEATLSVSHNSVNFGGSYNSRRSSANESNPLHMNKALEKLSSSPGAKSSFVGFPKPLLPRNHSSTTIALQNEDVFADSNNDAIIFEDEEYEGESDKMAHGKMEGGDNESSSTSPDERQIFGPYEIYAQTFAGSTHDKKLGAGRKTSIQDEMVGSLEQYKNNWLILQQQD.

One can recognise a Protein kinase domain in the interval 18 to 351 (YQKIEDISEG…TELQNLSEYT (334 aa)). Residues 27–35 (GSYGYVSLA) and Lys47 contribute to the ATP site. Positions 56–79 (GQYDGPQDDENDCDSSDCDDDEDT) are enriched in acidic residues. Residues 56–105 (GQYDGPQDDENDCDSSDCDDDEDTKVDTDRHENENGNASSNNGSSREKKH) form a disordered region. Basic and acidic residues predominate over residues 80-89 (KVDTDRHENE). Positions 90–99 (NGNASSNNGS) are enriched in low complexity. Asp207 acts as the Proton acceptor in catalysis. The tract at residues 377–397 (VPPSSAPVSLPTPISSSNKQH) is disordered. 2 positions are modified to phosphoserine: Ser416 and Ser419. 3 positions are modified to phosphothreonine: Thr501, Thr504, and Thr526. A Phosphoserine modification is found at Ser529. Positions 532 to 570 (HRYMEGFSNNNNKQYRQNRNYNNNNNNSNNNHGSNYNNF) are disordered. The span at 538–570 (FSNNNNKQYRQNRNYNNNNNNSNNNHGSNYNNF) shows a compositional bias: low complexity. Ser646 carries the post-translational modification Phosphoserine. Positions 732–824 (STNHNNNGNN…SDSKELEQER (93 aa)) are disordered. Positions 734-743 (NHNNNGNNNH) are enriched in low complexity. A compositionally biased stretch (polar residues) spans 744 to 754 (IDTNSTTNQYH). The span at 813–824 (HSSDSKELEQER) shows a compositional bias: basic and acidic residues. Phosphoserine occurs at positions 845 and 884. Residues 949 to 978 (EYEGESDKMAHGKMEGGDNESSSTSPDERQ) form a disordered region. The span at 953–964 (ESDKMAHGKMEG) shows a compositional bias: basic and acidic residues. Residue Thr1005 is modified to Phosphothreonine. Ser1014 is modified (phosphoserine).

This sequence belongs to the protein kinase superfamily. Ser/Thr protein kinase family. CK2 subfamily. Phosphorylated by PKA in a TORC1-dependent manner. Phosphorylation at PKA consensus sites RRxS/T decreases upon rapamycin treatment.

Its subcellular location is the nucleus. The catalysed reaction is L-seryl-[protein] + ATP = O-phospho-L-seryl-[protein] + ADP + H(+). It carries out the reaction L-threonyl-[protein] + ATP = O-phospho-L-threonyl-[protein] + ADP + H(+). Its function is as follows. May act on PRP20. In Saccharomyces cerevisiae (strain ATCC 204508 / S288c) (Baker's yeast), this protein is Serine/threonine-protein kinase KSP1 (KSP1).